The sequence spans 147 residues: uncharacterized protein (147 aa).

This is an uncharacterized protein from Schizosaccharomyces pombe (strain 972 / ATCC 24843) (Fission yeast).